Consider the following 381-residue polypeptide: Creatine kinase M-type (381 aa).

One can recognise a Phosphagen kinase N-terminal domain in the interval 11–98 (KLNYKSEEEY…FDPIIQDRHG (88 aa)). Positions 125–367 (YVLSSRVRTG…KLMVEMEKKL (243 aa)) constitute a Phosphagen kinase C-terminal domain. 128 to 132 (SSRVR) provides a ligand contact to ATP. The residue at position 164 (S164) is a Phosphoserine. T166 carries the post-translational modification Phosphothreonine. Position 178 is a phosphoserine (S178). T180 bears the Phosphothreonine mark. H191 is an ATP binding site. Phosphoserine is present on S199. Residues R236 and R292 each contribute to the ATP site. Phosphothreonine occurs at positions 313 and 322. 320–325 (RGTGGV) is a binding site for ATP. Residue S372 is modified to Phosphoserine.

This sequence belongs to the ATP:guanido phosphotransferase family. As to quaternary structure, dimer of identical or non-identical chains, which can be either B (brain type) or M (muscle type). With MM being the major form in skeletal muscle and myocardium, MB existing in myocardium, and BB existing in many tissues, especially brain.

It carries out the reaction creatine + ATP = N-phosphocreatine + ADP + H(+). Its function is as follows. Reversibly catalyzes the transfer of phosphate between ATP and various phosphogens (e.g. creatine phosphate). Creatine kinase isoenzymes play a central role in energy transduction in tissues with large, fluctuating energy demands, such as skeletal muscle, heart, brain and spermatozoa. In Oryctolagus cuniculus (Rabbit), this protein is Creatine kinase M-type (CKM).